The chain runs to 278 residues: MVWFKRAIPSIRTKDKRDTPEGLWSKCDSCGAALHKKQLEDHLYTCPHCGFHFRISPDLYFSFLFDDGKWEEFDAQLRAADPLKFVDTKPYPERVRSTMQKSGKSEACRNATGKLGGSDAVISGMDFGFIGGSMGSVVGEKIARAADKSVELNAPLIVISQSGGARMMEGAFSLMQMAKTSARLTRLGERGIPFISLMTDPTMGGISASFAMLGDLNISEPKALIGFAGPRVIRDTIKRDLPEGFQRAEFLQKHGFVDTIVHRKDLRAQLIKLLGHMK.

Residues 23 to 278 (LWSKCDSCGA…QLIKLLGHMK (256 aa)) enclose the CoA carboxyltransferase N-terminal domain. Cysteine 27, cysteine 30, cysteine 46, and cysteine 49 together coordinate Zn(2+). The segment at 27–49 (CDSCGAALHKKQLEDHLYTCPHC) adopts a C4-type zinc-finger fold.

The protein belongs to the AccD/PCCB family. In terms of assembly, acetyl-CoA carboxylase is a heterohexamer composed of biotin carboxyl carrier protein (AccB), biotin carboxylase (AccC) and two subunits each of ACCase subunit alpha (AccA) and ACCase subunit beta (AccD). Zn(2+) is required as a cofactor.

The protein resides in the cytoplasm. It carries out the reaction N(6)-carboxybiotinyl-L-lysyl-[protein] + acetyl-CoA = N(6)-biotinyl-L-lysyl-[protein] + malonyl-CoA. The protein operates within lipid metabolism; malonyl-CoA biosynthesis; malonyl-CoA from acetyl-CoA: step 1/1. Component of the acetyl coenzyme A carboxylase (ACC) complex. Biotin carboxylase (BC) catalyzes the carboxylation of biotin on its carrier protein (BCCP) and then the CO(2) group is transferred by the transcarboxylase to acetyl-CoA to form malonyl-CoA. The chain is Acetyl-coenzyme A carboxylase carboxyl transferase subunit beta from Chlorobaculum tepidum (strain ATCC 49652 / DSM 12025 / NBRC 103806 / TLS) (Chlorobium tepidum).